An 833-amino-acid polypeptide reads, in one-letter code: Enhancer of filamentation 1 (833 aa).

The 63-residue stretch at 3-65 folds into the SH3 domain; sequence ARNLMARALY…PGNRVKLLIG (63 aa). Tyrosine 91, tyrosine 163, tyrosine 165, tyrosine 176, tyrosine 188, tyrosine 213, and tyrosine 222 each carry phosphotyrosine. Positions 237 to 258 are disordered; sequence EKEYDFPPPMKQDGKPDTRPEG. The span at 248–258 shows a compositional bias: basic and acidic residues; it reads QDGKPDTRPEG. At serine 295 the chain carries Phosphoserine. Disordered regions lie at residues 297-316, 326-403, and 560-623; these read SLHH…SDAY, EVPT…RLRL, and PANS…SERS. A compositionally biased stretch (polar residues) spans 304-314; the sequence is QLGQSGDTQSD. Tyrosine 316 is modified (phosphotyrosine). The segment covering 331 to 343 has biased composition (basic and acidic residues); it reads TSEKANPEERDGV. Positions 350 to 833 are interacts with CTTN; it reads NPADAKGSRD…KRSLLEMATF (484 aa). The Caspase cleavage related site signature appears at 359-362; that stretch reads DVVD. Residue serine 368 is modified to Phosphoserine. Residues 368–396 are compositionally biased toward low complexity; sequence SFSSTGSTRSNMSTSSTSSKESSLSASPS. A compositionally biased stretch (polar residues) spans 564–586; it reads HLKNGPNSIMNSSEYTHPGSQMQ. Positions 709–759 are divergent helix-loop-helix motif; the sequence is FYYDQCETHFISLLNAIDALFSCVSSAQPPRIFVAHSKFVILSAHKLVFIG. The required for interaction with PLK1 stretch occupies residues 709 to 833; it reads FYYDQCETHF…KRSLLEMATF (125 aa). Serine 779 is modified (phosphoserine). A Phosphothreonine modification is found at threonine 803.

Belongs to the CAS family. Homodimer. Forms heterodimers with BCAR1/p130cas. Forms complexes with PTK2B/RAFTK, adapter protein CRKL and LYN kinase. Part of a complex composed of NEDD9, AURKA and CTTN; within the complex NEDD9 acts as a scaffold protein and is required for complex formation. Part of a ternary complex composed of SMAD3, ITCH/AIP4 and NEDD9/HEF1; within the complex NEDD9/HEF1 interacts (via N-terminus) with ITCH/AIP4 (via WW domains); the complex mediates ubiquitination and proteasomal degradation of NEDD9/HEF1. Interacts with SMAD3; the interaction promotes NEDD9 ubiquitination and proteasomal degradation. Interacts with ID2. Interacts with CTTN (via N-terminus). Interacts with MICAL. Interacts with TXNL4/DIM1. Interacts with BCAR3 (via Ras-GEF domain). Interacts with SH2D3C isoform 1 and isoform 2. Interacts with ECT2. Interacts with PTPN11/SHP-2 (via SH2 domains); the interaction is enhanced when NEDD9/CAS-L is tyrosine phosphorylated. Interacts (via C-terminus) with PLK1 (via polo box domains). Interacts with NKX2-5. Interacts with SMAD3; the interaction is inhibited by oxidation of NEDD9. Interacts with NEDD9/HEF1; interaction is induced by CXCL12 promotion of ABL-mediated phosphorylation of NEDD9/HEF1. Interacts (via SH3 domain) with PTK2/FAK. Interacts with FYN; in the presence of PTK2. Interacts with INPPL1/SHIP2. In terms of processing, polyubiquitinated by ITCH/AIP4, leading to proteasomal degradation. Post-translationally, PTK2/FAK1 phosphorylates the protein at the YDYVHL motif (conserved among all cas proteins) following integrin stimulation. The SRC family kinases (FYN, SRC, LCK and CRK) are recruited to the phosphorylated sites and can phosphorylate other tyrosine residues. Ligation of either integrin beta-1 or B-cell antigen receptor on tonsillar B-cells and B-cell lines promotes tyrosine phosphorylation and both integrin and BCR-mediated tyrosine phosphorylation requires an intact actin network. Phosphorylation is required to recruit NEDD9 to T-cell receptor microclusters at the periphery of newly formed immunological synapses. In fibroblasts transformation with oncogene v-ABL results in an increase in tyrosine phosphorylation. Transiently phosphorylated following CD3 cross-linking and this phosphorylated form binds to CRKL and C3G. A mutant lacking the SH3 domain is phosphorylated upon CD3 cross-linking but not upon integrin beta-1 cross-linking. Tyrosine phosphorylation occurs upon stimulation of the G-protein coupled C1a calcitonin receptor. Calcitonin-stimulated tyrosine phosphorylation is mediated by calcium- and protein kinase C-dependent mechanisms and requires the integrity of the actin cytoskeleton. Phosphorylation at Ser-368 induces proteasomal degradation. Phosphorylated by LYN. Phosphorylation at Ser-779 by CSNK1D or CSNK1E, or phosphorylation of Thr-803 by CSNK1E enhances the interaction of NEDD9 with PLK1. Expressed in splenic lymphocytes (at protein level). Expressed in T-cells (at protein level). Expressed in the thymus. Expressed throughout the brain however particularly abundant in the cortex and hippocampus.

It localises to the cytoplasm. The protein resides in the cell cortex. It is found in the nucleus. Its subcellular location is the golgi apparatus. The protein localises to the cell projection. It localises to the lamellipodium. The protein resides in the cell junction. It is found in the focal adhesion. Its subcellular location is the cytoskeleton. The protein localises to the spindle pole. It localises to the cilium. The protein resides in the cilium basal body. It is found in the basolateral cell membrane. Functionally, scaffolding protein which plays a central coordinating role for tyrosine-kinase-based signaling related to cell adhesion. As a focal adhesion protein, plays a role in embryonic fibroblast migration. May play an important role in integrin beta-1 or B cell antigen receptor (BCR) mediated signaling in B- and T-cells. Integrin beta-1 stimulation leads to recruitment of various proteins including CRKl and SHPTP2 to the tyrosine phosphorylated form. Promotes adhesion and migration of lymphocytes; as a result required for the correct migration of lymphocytes to the spleen and other secondary lymphoid organs. Plays a role in the organization of T-cell F-actin cortical cytoskeleton and the centralization of T-cell receptor microclusters at the immunological synapse. Negatively regulates cilia outgrowth in polarized cysts. Modulates cilia disassembly via activation of AURKA-mediated phosphorylation of HDAC6 and subsequent deacetylation of alpha-tubulin. Positively regulates RANKL-induced osteoclastogenesis. Required for the maintenance of hippocampal dendritic spines in the dentate gyrus and CA1 regions, thereby involved in spatial learning and memory. This chain is Enhancer of filamentation 1, found in Mus musculus (Mouse).